The chain runs to 639 residues: DNA primase (639 aa).

The CHC2-type zinc finger occupies 41 to 65; it reads CPFHNEKSPSFHVRPNHGHFHCFGC. Residues 262-348 enclose the Toprim domain; sequence HQAVVVEGYT…AGQSFVAVAP (87 aa). Mg(2+) is bound by residues Glu268, Asp319, and Asp321. The tract at residues 460–479 is disordered; the sequence is RAAQRPTAGPPTELAVRPDP.

This sequence belongs to the DnaG primase family. Monomer. Interacts with DnaB. The cofactor is Zn(2+). Mg(2+) serves as cofactor.

The catalysed reaction is ssDNA + n NTP = ssDNA/pppN(pN)n-1 hybrid + (n-1) diphosphate.. In terms of biological role, RNA polymerase that catalyzes the synthesis of short RNA molecules used as primers for DNA polymerase during DNA replication. This is DNA primase from Mycobacterium bovis (strain ATCC BAA-935 / AF2122/97).